The sequence spans 147 residues: MKVEEKVKELLLPILEERDFKLVDIEFIPSKRPILRIYIYNPEGTSIDDCEWVSKRIGALLDVEDLIDKAYILEVSSPGLDRKFKNIEEYDIFKGRDVVVKTKEPINEKKVFKGTLLGLEDEKVKIKENEETVEIPFENVSQTKLDF.

It belongs to the RimP family.

The protein localises to the cytoplasm. Required for maturation of 30S ribosomal subunits. This Sulfurihydrogenibium sp. (strain YO3AOP1) protein is Ribosome maturation factor RimP.